Reading from the N-terminus, the 273-residue chain is Mitochondrial distribution and morphology protein 12 (273 aa).

An SMP-LTD domain is found at 1 to 273 (MSIDFDWSKL…LVWPSYITIE (273 aa)). Residues 124–145 (LTSPIPESRPSTPMDNHQERDR) are disordered.

The protein belongs to the MDM12 family. In terms of assembly, component of the ER-mitochondria encounter structure (ERMES) or MDM complex, composed of mmm1, mdm10, mdm12 and mdm34. A mmm1 homodimer associates with one molecule of mdm12 on each side in a pairwise head-to-tail manner, and the SMP-LTD domains of mmm1 and mdm12 generate a continuous hydrophobic tunnel for phospholipid trafficking.

The protein resides in the mitochondrion outer membrane. Its subcellular location is the endoplasmic reticulum membrane. In terms of biological role, component of the ERMES/MDM complex, which serves as a molecular tether to connect the endoplasmic reticulum (ER) and mitochondria. Components of this complex are involved in the control of mitochondrial shape and protein biogenesis, and function in nonvesicular lipid trafficking between the ER and mitochondria. Mdm12 is required for the interaction of the ER-resident membrane protein mmm1 and the outer mitochondrial membrane-resident beta-barrel protein mdm10. The mdm12-mmm1 subcomplex functions in the major beta-barrel assembly pathway that is responsible for biogenesis of all mitochondrial outer membrane beta-barrel proteins, and acts in a late step after the SAM complex. The mdm10-mdm12-mmm1 subcomplex further acts in the TOM40-specific pathway after the action of the mdm12-mmm1 complex. Essential for establishing and maintaining the structure of mitochondria and maintenance of mtDNA nucleoids. The chain is Mitochondrial distribution and morphology protein 12 from Schizosaccharomyces pombe (strain 972 / ATCC 24843) (Fission yeast).